Here is an 839-residue protein sequence, read N- to C-terminus: DNA (cytosine-5)-methyltransferase CMT3 (839 aa).

Disordered stretches follow at residues 1-38 and 51-86; these read MAPK…EPVT and LDEP…KTKD. The segment covering 19 to 30 has biased composition (basic residues); it reads PKPKKRAPKRAK. The segment covering 51–70 has biased composition (basic and acidic residues); it reads LDEPIPESEAKSTWPDRYKP. In terms of domain architecture, BAH spans 108 to 227; that stretch reads QIYELNDDAY…LPYDTFEAIQ (120 aa). The SAM-dependent MTase C5-type domain maps to 269 to 813; that stretch reads ATLLDLYSGC…YALGTAFQGL (545 aa). In terms of domain architecture, Chromo spans 382 to 447; that stretch reads FTVDKIVGIS…LGYKSGILPL (66 aa). The active site involves Cys460.

Belongs to the class I-like SAM-binding methyltransferase superfamily. C5-methyltransferase family. As to quaternary structure, homodimer. Interacts with HP1 and, through its chromodomain, with the N-terminal tail of histone H3 doubly methylated at 'Lys-9' and 'Lys-27'. Binds to JMJ24. Ubiquitinated by JMJ24, subsequently beingargeted to proteasomal degradation thus initiating the destabilization of the heterochromatic state of endogenous silenced loci.

The protein localises to the nucleus. The enzyme catalyses a 2'-deoxycytidine in DNA + S-adenosyl-L-methionine = a 5-methyl-2'-deoxycytidine in DNA + S-adenosyl-L-homocysteine + H(+). In terms of biological role, involved in the CpXpG methylation (e.g. CHG cytosine) and in gene silencing. Methylates preferentially transposon-related sequences. Functionally redundant to DRM1/DRM2 to maintain non-CpG methylation. Involved in RNA-directed DNA methylation. In Arabidopsis thaliana (Mouse-ear cress), this protein is DNA (cytosine-5)-methyltransferase CMT3.